The chain runs to 81 residues: Photosystem I iron-sulfur center (81 aa).

4Fe-4S ferredoxin-type domains are found at residues 2–31 (SHTV…MVPW) and 39–68 (VASS…IRVY). [4Fe-4S] cluster is bound by residues cysteine 11, cysteine 14, cysteine 17, cysteine 21, cysteine 48, cysteine 51, cysteine 54, and cysteine 58.

In terms of assembly, the cyanobacterial PSI reaction center is composed of one copy each of PsaA,B,C,D,E,F,I,J,K,L,M and X, and forms trimeric complexes. [4Fe-4S] cluster serves as cofactor.

The protein localises to the cellular thylakoid membrane. It catalyses the reaction reduced [plastocyanin] + hnu + oxidized [2Fe-2S]-[ferredoxin] = oxidized [plastocyanin] + reduced [2Fe-2S]-[ferredoxin]. Apoprotein for the two 4Fe-4S centers FA and FB of photosystem I (PSI); essential for photochemical activity. FB is the terminal electron acceptor of PSI, donating electrons to ferredoxin. The C-terminus interacts with PsaA/B/D and helps assemble the protein into the PSI complex. Required for binding of PsaD and PsaE to PSI. PSI is a plastocyanin/cytochrome c6-ferredoxin oxidoreductase, converting photonic excitation into a charge separation, which transfers an electron from the donor P700 chlorophyll pair to the spectroscopically characterized acceptors A0, A1, FX, FA and FB in turn. This chain is Photosystem I iron-sulfur center, found in Trichormus variabilis (strain ATCC 29413 / PCC 7937) (Anabaena variabilis).